The sequence spans 188 residues: Probable chorismate pyruvate-lyase (188 aa).

Positions 90, 128, and 175 each coordinate substrate.

This sequence belongs to the UbiC family.

The protein localises to the cytoplasm. The enzyme catalyses chorismate = 4-hydroxybenzoate + pyruvate. The protein operates within cofactor biosynthesis; ubiquinone biosynthesis. Functionally, removes the pyruvyl group from chorismate, with concomitant aromatization of the ring, to provide 4-hydroxybenzoate (4HB) for the ubiquinone pathway. The protein is Probable chorismate pyruvate-lyase of Marinobacter nauticus (strain ATCC 700491 / DSM 11845 / VT8) (Marinobacter aquaeolei).